The chain runs to 214 residues: Small ribosomal subunit protein uS3c (214 aa).

A KH type-2 domain is found at 39 to 111; the sequence is IRTYLNKLAK…QLTINIIEVE (73 aa).

Belongs to the universal ribosomal protein uS3 family. In terms of assembly, part of the 30S ribosomal subunit.

The protein localises to the plastid. It localises to the chloroplast. The polypeptide is Small ribosomal subunit protein uS3c (rps3) (Trieres chinensis (Marine centric diatom)).